The chain runs to 180 residues: Adenine phosphoribosyltransferase (180 aa).

N-acetylalanine is present on A2. S15 and S30 each carry phosphoserine. Residue Y60 is modified to Phosphotyrosine. Phosphoserine is present on S66. The residue at position 114 (K114) is an N6-acetyllysine. Residue T135 is modified to Phosphothreonine.

Belongs to the purine/pyrimidine phosphoribosyltransferase family. As to quaternary structure, homodimer.

The protein localises to the cytoplasm. It carries out the reaction AMP + diphosphate = 5-phospho-alpha-D-ribose 1-diphosphate + adenine. It functions in the pathway purine metabolism; AMP biosynthesis via salvage pathway; AMP from adenine: step 1/1. Its function is as follows. Catalyzes a salvage reaction resulting in the formation of AMP, that is energically less costly than de novo synthesis. This chain is Adenine phosphoribosyltransferase, found in Dipodillus campestris (North African gerbil).